A 144-amino-acid polypeptide reads, in one-letter code: Large ribosomal subunit protein uL13 (144 aa).

This sequence belongs to the universal ribosomal protein uL13 family. Part of the 50S ribosomal subunit.

This protein is one of the early assembly proteins of the 50S ribosomal subunit, although it is not seen to bind rRNA by itself. It is important during the early stages of 50S assembly. The polypeptide is Large ribosomal subunit protein uL13 (Moorella thermoacetica (strain ATCC 39073 / JCM 9320)).